The primary structure comprises 423 residues: Gamma-glutamyl phosphate reductase (423 aa).

This sequence belongs to the gamma-glutamyl phosphate reductase family.

Its subcellular location is the cytoplasm. It catalyses the reaction L-glutamate 5-semialdehyde + phosphate + NADP(+) = L-glutamyl 5-phosphate + NADPH + H(+). It functions in the pathway amino-acid biosynthesis; L-proline biosynthesis; L-glutamate 5-semialdehyde from L-glutamate: step 2/2. Catalyzes the NADPH-dependent reduction of L-glutamate 5-phosphate into L-glutamate 5-semialdehyde and phosphate. The product spontaneously undergoes cyclization to form 1-pyrroline-5-carboxylate. The sequence is that of Gamma-glutamyl phosphate reductase from Paraburkholderia phytofirmans (strain DSM 17436 / LMG 22146 / PsJN) (Burkholderia phytofirmans).